A 296-amino-acid polypeptide reads, in one-letter code: Maltose/maltodextrin transport system permease protein MalG (296 aa).

Over 1 to 12 (MAMVQPKSQKLR) the chain is Cytoplasmic. The helical transmembrane segment at 13 to 35 (LLITHLGLLIFIAAIMFPLLMVI) threads the bilayer. Residues 36–88 (AISLREGNFATGSLIPDKISWEHWRLALGFSVEHADGRVTPPPFPVLLWLWNS) lie on the Periplasmic side of the membrane. The 197-residue stretch at 85–281 (LWNSVKIAGI…IPITLVFLLA (197 aa)) folds into the ABC transmembrane type-1 domain. Residues 89 to 111 (VKIAGITAIGIVALSTTCAYAFA) form a helical membrane-spanning segment. The Cytoplasmic segment spans residues 112–123 (RMRFPGKATLLK). A helical transmembrane segment spans residues 124–143 (GMLIFQMFPAVLSLVALYAL). Topologically, residues 144–152 (FDRLGQYIP) are periplasmic. The chain crosses the membrane as a helical span at residues 153–175 (FIGLNTHGGVIFAYLGGIALHVW). Residues 176–204 (TIKGYFETIDSSLEEAAALDGATPWQAFR) are Cytoplasmic-facing. The chain crosses the membrane as a helical span at residues 205–227 (LVLLPLSVPILAVVFILSFIAAI). The Periplasmic portion of the chain corresponds to 228–257 (TEVPVASLLLRDVDSYTLAVGMQQYLNPQN). Residues 258-280 (YLWGDFAAAAVLSAIPITLVFLL) form a helical membrane-spanning segment. Over 281–296 (AQRWLVNGLTAGGVKG) the chain is Cytoplasmic.

Belongs to the binding-protein-dependent transport system permease family. MalFG subfamily. As to quaternary structure, the complex is composed of two ATP-binding proteins (MalK), two transmembrane proteins (MalG and MalF) and a solute-binding protein (MalE).

It localises to the cell inner membrane. Part of the ABC transporter complex MalEFGK involved in maltose/maltodextrin import. Probably responsible for the translocation of the substrate across the membrane. The protein is Maltose/maltodextrin transport system permease protein MalG (malG) of Salmonella typhimurium (strain LT2 / SGSC1412 / ATCC 700720).